Reading from the N-terminus, the 160-residue chain is CXXC motif containing zinc binding protein (160 aa).

Cysteine 33, cysteine 36, cysteine 67, and cysteine 70 together coordinate Zn(2+). Position 75 is a phosphoserine (serine 75).

This sequence belongs to the UPF0587 family. In terms of assembly, monomer.

This chain is CXXC motif containing zinc binding protein, found in Homo sapiens (Human).